The primary structure comprises 331 residues: Lipoate-protein ligase LplJ (331 aa).

The BPL/LPL catalytic domain occupies 27 to 214; it reads DPEQQYLLFY…HIFNTNDVGN (188 aa). Residues arginine 69, 74–77, and lysine 131 contribute to the ATP site; that span reads GAVY. (R)-lipoate is bound at residue lysine 131.

The protein belongs to the LplA family.

Its subcellular location is the cytoplasm. It catalyses the reaction L-lysyl-[lipoyl-carrier protein] + (R)-lipoate + ATP = N(6)-[(R)-lipoyl]-L-lysyl-[lipoyl-carrier protein] + AMP + diphosphate + H(+). It functions in the pathway protein modification; protein lipoylation via exogenous pathway; protein N(6)-(lipoyl)lysine from lipoate: step 1/2. The protein operates within protein modification; protein lipoylation via exogenous pathway; protein N(6)-(lipoyl)lysine from lipoate: step 2/2. Catalyzes both the ATP-dependent activation of exogenously supplied lipoate to lipoyl-AMP and the transfer of the activated lipoyl onto the lipoyl domains of lipoate-dependent enzymes. Is also able to use octanoate as substrate. This chain is Lipoate-protein ligase LplJ (lplJ), found in Bacillus subtilis (strain 168).